A 290-amino-acid polypeptide reads, in one-letter code: RxLR effector protein Avr4 (290 aa).

Residues 1–24 (MRSLHILLVITASLLASLAVSAEA) form the signal peptide. Residues 33–56 (VVENNKDKSRFLRDGGTTEAQTDE) are disordered. Basic and acidic residues predominate over residues 36-45 (NNKDKSRFLR). The short motif at 42–58 (RFLRDGGTTEAQTDEER) is the RxLR-dEER element. The W1 motif stretch occupies residues 118 to 141 (KYERMQWQKLNEGQTLTYMRVGDR). The interval 151–174 (QLLRWVAQKKTVKSVYDDLQIEGF) is W2 motif. Residues 224 to 247 (VFEKWAMEGTHIKSVIKTLNLNNK) are W3 motif. N-linked (GlcNAc...) asparagine glycosylation occurs at Asn246. Positions 249-270 (ASEMANNENFPALLKYVKLYLD) are y motif.

It belongs to the RxLR effector family.

It is found in the secreted. Its subcellular location is the host cytoplasm. The protein resides in the host nucleus. It localises to the host nucleolus. The protein localises to the host cytoskeleton. Functionally, secreted effector that acts as an elicitor of hypersensitive response (HR) specifically on plants carrying defense protein R4, through its interaction with this protein. This chain is RxLR effector protein Avr4, found in Phytophthora mirabilis.